We begin with the raw amino-acid sequence, 338 residues long: uncharacterized protein (338 aa).

Residues 111–334 form the Radical SAM core domain; sequence HLGEERVLVP…LELAEKYNLD (224 aa). Residues Cys-129, Cys-133, and Cys-136 each contribute to the [4Fe-4S] cluster site.

The cofactor is [4Fe-4S] cluster.

This is an uncharacterized protein from Methanocaldococcus jannaschii (strain ATCC 43067 / DSM 2661 / JAL-1 / JCM 10045 / NBRC 100440) (Methanococcus jannaschii).